The sequence spans 134 residues: Nogalonic acid methyl ester cyclase (134 aa).

Residue Gln-95 participates in nogalaviketone binding. The active-site Proton donor/acceptor is the Asp-111.

Belongs to the polyketide cyclase DnrD family. In terms of assembly, homotetramer. Dimer of dimers.

It catalyses the reaction nogalaviketone = methyl nogalonate. It participates in antibiotic biosynthesis. Involved in the biosynthesis of the aromatic polyketide antibiotic nogalamycin. Catalyzes the formation of nogalaviketone from nogalonic acid methyl ester (NAME), the last ring-closure step in the biosynthesis of nogalamycin. The protein is Nogalonic acid methyl ester cyclase of Streptomyces nogalater.